The primary structure comprises 344 residues: MSYYETIASRTEPKKQLPWVEKYRPQEIDHIISNRDIILSLKKFIESRTLPHLLFFGPSGSGKTSTIKCCAREIYGKYINYMILELNASNERGIETVRTKIKNFVSSKSSIFLPMGVRDIFKLVILDEIDSMTVEAQGMLRQTIEKNSGTTRFCLICNDIDKINIALQSRCASFRFSPLNELDMHGRLSDICRLEGVKYEKEAINSIIKISKGDMRSAINTLQHVNLVIGGSINTEDVYKISGHCMPEIVTDVFDILFSLNKNKTKSLKKSVNDIITIVTENNITIFNLLEELKNIVMESKFTTSQKIFLIDNFAKTEMYDSVNVDSNNILMILACLFVFVNNV.

An ATP-binding site is contributed by 57 to 64 (GPSGSGKT).

Belongs to the activator 1 small subunits family. RfcS subfamily.

Part of the RFC clamp loader complex which loads the PCNA sliding clamp onto DNA. The chain is Putative replication factor C small subunit L499 from Acanthamoeba polyphaga mimivirus (APMV).